The following is a 554-amino-acid chain: Valerianol synthase TPS8 (554 aa).

A DDXXD motif motif is present at residues 288–292 (QHSVG). Positions 307, 311, 452, 456, and 460 each coordinate Mg(2+).

This sequence belongs to the terpene synthase family. The cofactor is Mg(2+).

The enzyme catalyses (2E,6E)-farnesyl diphosphate + H2O = valerianol + diphosphate. It participates in secondary metabolite biosynthesis; terpenoid biosynthesis. In terms of biological role, terpene synthase that catalyzes the biosynthesis of the terpene valerianol. The chain is Valerianol synthase TPS8 from Camellia sinensis (Tea plant).